A 210-amino-acid chain; its full sequence is Transcriptional regulator DauR (210 aa).

The protein belongs to the DauR family.

Functionally, dauR represses the dauBAR operon. The chain is Transcriptional regulator DauR from Pseudomonas aeruginosa (strain ATCC 15692 / DSM 22644 / CIP 104116 / JCM 14847 / LMG 12228 / 1C / PRS 101 / PAO1).